Reading from the N-terminus, the 1603-residue chain is Protein TIC 214 (1603 aa).

Helical transmembrane passes span 11-31, 58-78, 86-106, 131-151, 167-187, and 213-233; these read VLWA…LFGL, LSGT…FLSI, LLLK…FYWY, IFFD…SPIL, LFVL…FNCI, and FSIF…VPFF.

The protein belongs to the TIC214 family. In terms of assembly, part of the Tic complex.

Its subcellular location is the plastid. The protein resides in the chloroplast inner membrane. Its function is as follows. Involved in protein precursor import into chloroplasts. May be part of an intermediate translocation complex acting as a protein-conducting channel at the inner envelope. The protein is Protein TIC 214 of Physcomitrium patens (Spreading-leaved earth moss).